Reading from the N-terminus, the 606-residue chain is ATP-dependent rRNA helicase SPB4 (606 aa).

Residues 7 to 35 (WDNLGFSLLPWIRTGLDVMGFETMTPVQA) carry the Q motif motif. One can recognise a Helicase ATP-binding domain in the interval 38–224 (IPMLAGNKDV…KTGLRNPVRI (187 aa)). 51-58 (SVTGSGKT) contacts ATP. The DEAD box motif lies at 172–175 (DEAD). One can recognise a Helicase C-terminal domain in the interval 248–404 (KLQLLVSILN…ELDLEVKGIT (157 aa)). Serine 254 carries the phosphoserine modification. The stretch at 539 to 582 (KTLTKERKLERKEKMSLKRKAIEEELKAEELDENAEEERIKEDW) forms a coiled coil.

Belongs to the DEAD box helicase family. DDX55/SPB4 subfamily. In terms of assembly, component of pre-60S ribosomal complexes.

The protein resides in the nucleus. It is found in the nucleolus. The enzyme catalyses ATP + H2O = ADP + phosphate + H(+). ATP-binding RNA helicase involved in the biogenesis of 60S ribosomal subunits. Binds 90S pre-ribosomal particles and dissociates from pre-60S ribosomal particles after processing of 27SB pre-rRNA. Required for the normal formation of 18S rRNA through the processing of pre-rRNAs at sites A0, A1 and A2, and the normal formation of 25S and 5.8S rRNAs through the processing of pre-rRNAs at sites C1 and C2. Also required for recruitment of NOG2 to pre-ribosomes. In Saccharomyces cerevisiae (strain ATCC 204508 / S288c) (Baker's yeast), this protein is ATP-dependent rRNA helicase SPB4.